Here is a 243-residue protein sequence, read N- to C-terminus: Phosphoribosylaminoimidazole-succinocarboxamide synthase (243 aa).

This sequence belongs to the SAICAR synthetase family.

The enzyme catalyses 5-amino-1-(5-phospho-D-ribosyl)imidazole-4-carboxylate + L-aspartate + ATP = (2S)-2-[5-amino-1-(5-phospho-beta-D-ribosyl)imidazole-4-carboxamido]succinate + ADP + phosphate + 2 H(+). It functions in the pathway purine metabolism; IMP biosynthesis via de novo pathway; 5-amino-1-(5-phospho-D-ribosyl)imidazole-4-carboxamide from 5-amino-1-(5-phospho-D-ribosyl)imidazole-4-carboxylate: step 1/2. In Thermosynechococcus vestitus (strain NIES-2133 / IAM M-273 / BP-1), this protein is Phosphoribosylaminoimidazole-succinocarboxamide synthase.